The chain runs to 385 residues: Cellulase CelDZ1 (385 aa).

Residues 6–26 (INKWYFFVGMLVIFAVIISLI) form a helical membrane-spanning segment. Residues His87, 91–92 (WF), Tyr118, and His153 contribute to the substrate site. Glu192 (proton donor) is an active-site residue. Tyr261 is a binding site for substrate. The active-site Nucleophile is the Glu294. Residues 300–301 (AS), Trp328, and 333–335 (KNE) contribute to the substrate site.

It belongs to the glycosyl hydrolase 5 (cellulase A) family. Monomer.

The protein resides in the cell membrane. The enzyme catalyses Endohydrolysis of (1-&gt;4)-beta-D-glucosidic linkages in cellulose, lichenin and cereal beta-D-glucans.. Its activity is regulated as follows. Activity is enhanced by 1mM Mn(2+), but is not affected by 1mM Ca(2+), Mg(2+), Zn(2+), K(+), Na(+) or Li(+). Activity is not inhibited by EDTA (in vitro). Functionally, thermostable endoglucanase that has high activity with soluble polymeric substrates containing beta-1,4-glycosidic bonds, such as carboxymethyl cellulose (CMC) and barley beta-D-glucan (in vitro). Has no activity with cellobiose and filter paper. Has no activity with substrates containing beta-1,3-linked glycans, such as laminarin. Likewise, lacks activity with xylan, galactomannan and pectin. The protein is Cellulase CelDZ1 of Thermoanaerobacterium sp.